Here is a 470-residue protein sequence, read N- to C-terminus: uncharacterized protein (470 aa).

The 69-residue stretch at 1–69 (MTRYQHLATL…PRSGYFVAQR (69 aa)) folds into the HTH gntR-type domain. N6-(pyridoxal phosphate)lysine is present on Lys313.

The protein in the C-terminal section; belongs to the class-I pyridoxal-phosphate-dependent aminotransferase family.

This is an uncharacterized protein from Escherichia coli (strain K12).